The sequence spans 387 residues: Alanine racemase (387 aa).

K48 functions as the Proton acceptor; specific for D-alanine in the catalytic mechanism. Position 48 is an N6-(pyridoxal phosphate)lysine (K48). R146 provides a ligand contact to substrate. Y267 serves as the catalytic Proton acceptor; specific for L-alanine. M315 serves as a coordination point for substrate.

This sequence belongs to the alanine racemase family. It depends on pyridoxal 5'-phosphate as a cofactor.

The catalysed reaction is L-alanine = D-alanine. The protein operates within amino-acid biosynthesis; D-alanine biosynthesis; D-alanine from L-alanine: step 1/1. In terms of biological role, catalyzes the interconversion of L-alanine and D-alanine. May also act on other amino acids. The chain is Alanine racemase (alr) from Methylacidiphilum infernorum (isolate V4) (Methylokorus infernorum (strain V4)).